Reading from the N-terminus, the 196-residue chain is Phosphoheptose isomerase (196 aa).

The SIS domain maps to 34–193 (LIETFKIGNK…EQGLFGIFAG (160 aa)). Residue 49 to 51 (NGG) coordinates substrate. Zn(2+) is bound by residues His-58 and Glu-62. Substrate-binding positions include Glu-62, 91 to 92 (ND), 117 to 119 (STS), Ser-122, and Gln-169. Zn(2+) is bound by residues Gln-169 and His-177.

The protein belongs to the SIS family. GmhA subfamily. As to quaternary structure, homotetramer. It depends on Zn(2+) as a cofactor.

Its subcellular location is the cytoplasm. The catalysed reaction is 2 D-sedoheptulose 7-phosphate = D-glycero-alpha-D-manno-heptose 7-phosphate + D-glycero-beta-D-manno-heptose 7-phosphate. It functions in the pathway carbohydrate biosynthesis; D-glycero-D-manno-heptose 7-phosphate biosynthesis; D-glycero-alpha-D-manno-heptose 7-phosphate and D-glycero-beta-D-manno-heptose 7-phosphate from sedoheptulose 7-phosphate: step 1/1. In terms of biological role, catalyzes the isomerization of sedoheptulose 7-phosphate in D-glycero-D-manno-heptose 7-phosphate. The polypeptide is Phosphoheptose isomerase (Trichlorobacter lovleyi (strain ATCC BAA-1151 / DSM 17278 / SZ) (Geobacter lovleyi)).